A 651-amino-acid polypeptide reads, in one-letter code: MBT domain-containing protein 1 (651 aa).

A disordered region spans residues 21–55; sequence SFGMFDGYDSCSEDTSSSSSSDESEEEVAPLPSSL. Residues 29–41 are compositionally biased toward low complexity; the sequence is DSCSEDTSSSSSS. The FCS-type zinc finger occupies 68 to 103; sequence PDGKSGMATCEMCGMVGVRDAFYSKTKRFCSVSCSR. The Zn(2+) site is built by Cys77, Cys80, Cys97, and Cys101. 4 MBT repeats span residues 164-268, 276-373, 374-479, and 487-583; these read FSWG…LVPP, TNWK…IGHR, FKRT…LTPP, and FKWF…LQPP. 2 disordered regions span residues 581–610 and 629–651; these read QPPA…YKGH and TFLQ…KQEP. A compositionally biased stretch (low complexity) spans 586-596; that stretch reads QSNKDSQSNIS. Positions 597–610 are enriched in basic residues; sequence KQKKKSKSQPYKGH. Over residues 632 to 643 the composition is skewed to polar residues; it reads QGASDQESNGSG.

In terms of assembly, monomer. Component of the NuA4 histone acetyltransferase complex.

It localises to the nucleus. It is found in the chromosome. Functionally, chromatin reader component of the NuA4 histone acetyltransferase complex, a multiprotein complex involved in transcriptional activation of select genes principally by acetylation of nucleosomal histones H4 and H2A. The NuA4 complex plays a direct role in repair of DNA double-strand breaks (DSBs) by promoting homologous recombination (HR). MBTD1 specifically recognizes and binds monomethylated and dimethylated 'Lys-20' on histone H4 (H4K20me1 and H4K20me2, respectively). In the NuA4 complex, MBTD1 promotes recruitment of the complex to H4K20me marks by competing with TP53BP1 for binding to H4K20me. Following recruitment to H4K20me at DNA breaks, the NuA4 complex catalyzes acetylation of 'Lys-15' on histone H2A (H2AK15), blocking the ubiquitination mark required for TP53BP1 localization at DNA breaks, thereby promoting homologous recombination (HR). The polypeptide is MBT domain-containing protein 1 (Xenopus tropicalis (Western clawed frog)).